The primary structure comprises 93 residues: Co-chaperonin GroES (93 aa).

The protein belongs to the GroES chaperonin family. Heptamer of 7 subunits arranged in a ring. Interacts with the chaperonin GroEL.

The protein localises to the cytoplasm. In terms of biological role, together with the chaperonin GroEL, plays an essential role in assisting protein folding. The GroEL-GroES system forms a nano-cage that allows encapsulation of the non-native substrate proteins and provides a physical environment optimized to promote and accelerate protein folding. GroES binds to the apical surface of the GroEL ring, thereby capping the opening of the GroEL channel. The chain is Co-chaperonin GroES from Streptococcus intermedius.